The sequence spans 859 residues: Leucine--tRNA ligase (859 aa).

Positions 42–52 (PYPSGRLHMGH) match the 'HIGH' region motif. Residues 618 to 622 (KMSKS) carry the 'KMSKS' region motif. Lysine 621 is an ATP binding site.

This sequence belongs to the class-I aminoacyl-tRNA synthetase family.

Its subcellular location is the cytoplasm. It carries out the reaction tRNA(Leu) + L-leucine + ATP = L-leucyl-tRNA(Leu) + AMP + diphosphate. This chain is Leucine--tRNA ligase, found in Shewanella sp. (strain MR-7).